A 226-amino-acid chain; its full sequence is Ribose-5-phosphate isomerase A (226 aa).

Residues 28-31, 84-87, and 97-100 each bind substrate; these read TGST, DGAD, and KGLG. Residue Glu106 is the Proton acceptor of the active site. A substrate-binding site is contributed by Lys124.

Belongs to the ribose 5-phosphate isomerase family. As to quaternary structure, homodimer.

The enzyme catalyses aldehydo-D-ribose 5-phosphate = D-ribulose 5-phosphate. It functions in the pathway carbohydrate degradation; pentose phosphate pathway; D-ribose 5-phosphate from D-ribulose 5-phosphate (non-oxidative stage): step 1/1. Functionally, catalyzes the reversible conversion of ribose-5-phosphate to ribulose 5-phosphate. In Deinococcus radiodurans (strain ATCC 13939 / DSM 20539 / JCM 16871 / CCUG 27074 / LMG 4051 / NBRC 15346 / NCIMB 9279 / VKM B-1422 / R1), this protein is Ribose-5-phosphate isomerase A.